Consider the following 37-residue polypeptide: MKVRASVKAICKDCKIVKRSGVVRVICANSKHKQRQG.

Belongs to the bacterial ribosomal protein bL36 family.

This chain is Large ribosomal subunit protein bL36, found in Ureaplasma parvum serovar 3 (strain ATCC 27815 / 27 / NCTC 11736).